The primary structure comprises 38 residues: Photosystem II reaction center protein T (38 aa).

Residues 3–23 (ALVYTFLLVSTLGIIFFAIFF) traverse the membrane as a helical segment.

This sequence belongs to the PsbT family. As to quaternary structure, PSII is composed of 1 copy each of membrane proteins PsbA, PsbB, PsbC, PsbD, PsbE, PsbF, PsbH, PsbI, PsbJ, PsbK, PsbL, PsbM, PsbT, PsbY, PsbZ, Psb30/Ycf12, at least 3 peripheral proteins of the oxygen-evolving complex and a large number of cofactors. It forms dimeric complexes.

It localises to the plastid. The protein resides in the chloroplast thylakoid membrane. Functionally, found at the monomer-monomer interface of the photosystem II (PS II) dimer, plays a role in assembly and dimerization of PSII. PSII is a light-driven water plastoquinone oxidoreductase, using light energy to abstract electrons from H(2)O, generating a proton gradient subsequently used for ATP formation. This chain is Photosystem II reaction center protein T, found in Secale cereale (Rye).